Here is a 204-residue protein sequence, read N- to C-terminus: Small heat shock protein, chloroplastic (204 aa).

A disordered region spans residues 34 to 55 (QMGRVDHDHELDDRSNRAPISR). Over residues 37–49 (RVDHDHELDDRSN) the composition is skewed to basic and acidic residues. Residues 98–204 (GSGRAMRRGW…KKDVFQVMVD (107 aa)) enclose the sHSP domain.

Belongs to the small heat shock protein (HSP20) family.

The protein resides in the plastid. Its subcellular location is the chloroplast stroma. This is Small heat shock protein, chloroplastic (HSP23) from Oxybasis rubra (Red goosefoot).